The chain runs to 247 residues: Acidic 27 kDa endochitinase (247 aa).

The first 16 residues, 1–16 (MVLCCVFLLFLTGSFA), serve as a signal peptide directing secretion. Residue Glu84 is the Proton donor of the active site. A disulfide bond links Cys206 and Cys238.

It belongs to the glycosyl hydrolase 19 family. Chitinase class II subfamily.

The protein localises to the secreted. Its subcellular location is the extracellular space. It catalyses the reaction Random endo-hydrolysis of N-acetyl-beta-D-glucosaminide (1-&gt;4)-beta-linkages in chitin and chitodextrins.. Functionally, defense against chitin-containing fungal pathogens. This is Acidic 27 kDa endochitinase (CHI17) from Solanum lycopersicum (Tomato).